Reading from the N-terminus, the 561-residue chain is Excitatory amino acid transporter 4 (561 aa).

The Cytoplasmic portion of the chain corresponds to 1 to 52; it reads MSSHGNSLFLRESGAGGGCLQGLQDSLQQRALRTRLRLQTMTREHVRRFLRR. At Ser-2 the chain carries Phosphoserine. 3 helical membrane-spanning segments follow: residues 53-73, 96-116, and 130-150; these read NAFILLTVSAVIIGVSLAFAL, MLQMLVLPLIVSSLVTGMASL, and VYYMVTTVIAVFIGILMVTII. N-linked (GlcNAc...) asparagine glycans are attached at residues Asn-213, Asn-229, and Asn-236. 3 consecutive transmembrane segments (helical) span residues 259–282, 292–319, and 341–362; these read SANGINALGLVVFSVAFGLVIGGM, FFDSLNEAIMRLVGIIIWYAPVGILFLI, and LTVIVGLFLHAGGVLPLIYFLV. Positions 368–398 form an intramembrane region, discontinuously helical; that stretch reads FPFIGGMLQALITAMGTSSSSATLPITFRCL. 385–387 provides a ligand contact to L-aspartate; that stretch reads SSS. Residues 408-434 form a helical membrane-spanning segment; that stretch reads ITRFVLPVGATVNMDGTALYEALAAIF. The Na(+) site is built by Gly-416, Thr-418, and Asn-420. Residues Thr-424, 465–469, Asp-498, and Asn-505 contribute to the L-aspartate site; that span reads IPQAG. The discontinuously helical intramembrane region spans 448-481; that stretch reads ITTISITATAASVGAAGIPQAGLVTMVIVLTSVG. Residues 495–516 traverse the membrane as a helical segment; it reads WFLDRLRTMTNVLGDSIGAAVI. Asn-505 and Asp-509 together coordinate Na(+).

Belongs to the dicarboxylate/amino acid:cation symporter (DAACS) (TC 2.A.23) family. SLC1A6 subfamily. In terms of assembly, homotrimer. Brain specific.

Its subcellular location is the cell membrane. The enzyme catalyses K(+)(in) + L-glutamate(out) + 3 Na(+)(out) + H(+)(out) = K(+)(out) + L-glutamate(in) + 3 Na(+)(in) + H(+)(in). It catalyses the reaction K(+)(in) + L-aspartate(out) + 3 Na(+)(out) + H(+)(out) = K(+)(out) + L-aspartate(in) + 3 Na(+)(in) + H(+)(in). The catalysed reaction is D-aspartate(out) + K(+)(in) + 3 Na(+)(out) + H(+)(out) = D-aspartate(in) + K(+)(out) + 3 Na(+)(in) + H(+)(in). In terms of biological role, sodium-dependent, high-affinity amino acid transporter that mediates the uptake of L-glutamate and also L-aspartate and D-aspartate. Functions as a symporter that transports one amino acid molecule together with two or three Na(+) ions and one proton, in parallel with the counter-transport of one K(+) ion. Mediates Cl(-) flux that is not coupled to amino acid transport; this avoids the accumulation of negative charges due to aspartate and Na(+) symport. Plays a redundant role in the rapid removal of released glutamate from the synaptic cleft, which is essential for terminating the postsynaptic action of glutamate. This is Excitatory amino acid transporter 4 (Slc1a6) from Mus musculus (Mouse).